The chain runs to 187 residues: Oligoribonuclease (187 aa).

Positions 7–170 constitute an Exonuclease domain; the sequence is LIWIDLEMTG…DDIKDSINEL (164 aa). Residue Tyr-128 is part of the active site.

It belongs to the oligoribonuclease family.

The protein localises to the cytoplasm. Its function is as follows. 3'-to-5' exoribonuclease specific for small oligoribonucleotides. The chain is Oligoribonuclease from Legionella pneumophila (strain Paris).